The following is a 326-amino-acid chain: Ribose operon repressor (326 aa).

An HTH lacI-type domain is found at 1–56; that stretch reads MATIKDVAGAAGVSVATVSRNLNDNGYVHEETRTRVIAAMAKLNYYPNEVARSLYK. The segment at residues 4 to 23 is a DNA-binding region (H-T-H motif); the sequence is IKDVAGAAGVSVATVSRNLN.

Transcriptional repressor for the ribose rbsDACBK operon. The polypeptide is Ribose operon repressor (rbsR) (Bacillus subtilis (strain 168)).